Reading from the N-terminus, the 359-residue chain is UDP-3-O-acylglucosamine N-acyltransferase (359 aa).

Histidine 253 functions as the Proton acceptor in the catalytic mechanism.

The protein belongs to the transferase hexapeptide repeat family. LpxD subfamily. Homotrimer.

It carries out the reaction a UDP-3-O-[(3R)-3-hydroxyacyl]-alpha-D-glucosamine + a (3R)-hydroxyacyl-[ACP] = a UDP-2-N,3-O-bis[(3R)-3-hydroxyacyl]-alpha-D-glucosamine + holo-[ACP] + H(+). It functions in the pathway bacterial outer membrane biogenesis; LPS lipid A biosynthesis. In terms of biological role, catalyzes the N-acylation of UDP-3-O-acylglucosamine using 3-hydroxyacyl-ACP as the acyl donor. Is involved in the biosynthesis of lipid A, a phosphorylated glycolipid that anchors the lipopolysaccharide to the outer membrane of the cell. The sequence is that of UDP-3-O-acylglucosamine N-acyltransferase from Burkholderia lata (strain ATCC 17760 / DSM 23089 / LMG 22485 / NCIMB 9086 / R18194 / 383).